Reading from the N-terminus, the 157-residue chain is 6,7-dimethyl-8-ribityllumazine synthase (157 aa).

5-amino-6-(D-ribitylamino)uracil contacts are provided by residues phenylalanine 22, 56–58 (AFE), and 81–83 (VLI). Residue 86 to 87 (ET) coordinates (2S)-2-hydroxy-3-oxobutyl phosphate. The active-site Proton donor is histidine 89. Phenylalanine 114 contributes to the 5-amino-6-(D-ribitylamino)uracil binding site. Arginine 128 lines the (2S)-2-hydroxy-3-oxobutyl phosphate pocket.

The protein belongs to the DMRL synthase family.

The enzyme catalyses (2S)-2-hydroxy-3-oxobutyl phosphate + 5-amino-6-(D-ribitylamino)uracil = 6,7-dimethyl-8-(1-D-ribityl)lumazine + phosphate + 2 H2O + H(+). It functions in the pathway cofactor biosynthesis; riboflavin biosynthesis; riboflavin from 2-hydroxy-3-oxobutyl phosphate and 5-amino-6-(D-ribitylamino)uracil: step 1/2. Functionally, catalyzes the formation of 6,7-dimethyl-8-ribityllumazine by condensation of 5-amino-6-(D-ribitylamino)uracil with 3,4-dihydroxy-2-butanone 4-phosphate. This is the penultimate step in the biosynthesis of riboflavin. The sequence is that of 6,7-dimethyl-8-ribityllumazine synthase from Chlamydia trachomatis serovar L2 (strain ATCC VR-902B / DSM 19102 / 434/Bu).